Reading from the N-terminus, the 220-residue chain is Kinetochore protein Spc25 (220 aa).

Residues 41–119 are a coiled coil; that stretch reads ILLDVKEAAA…NEIMERIHTL (79 aa).

This sequence belongs to the SPC25 family. Component of the Ndc80 complex, which is composed of Ndc80, Nuf2 and Spc25.

The protein localises to the nucleus. The protein resides in the chromosome. Its subcellular location is the centromere. It localises to the kinetochore. Its function is as follows. Acts as a component of the essential kinetochore-associated Ndc80 complex, which is required for chromosome segregation and spindle checkpoint activity during meiosis and mitosis. Required for kinetochore integrity and the organization of stable microtubule binding sites in the outer plate of the kinetochore. Participates in SAC signaling that responds specifically to disruptions in spindle microtubule dynamics. The NDC80 complex synergistically enhances the affinity of the SKA1 complex for microtubules and may allow the NDC80 complex to track depolymerizing microtubules. The protein is Kinetochore protein Spc25 of Drosophila erecta (Fruit fly).